Here is a 60-residue protein sequence, read N- to C-terminus: UPF0434 protein ETA_21370 (60 aa).

This sequence belongs to the UPF0434 family.

In Erwinia tasmaniensis (strain DSM 17950 / CFBP 7177 / CIP 109463 / NCPPB 4357 / Et1/99), this protein is UPF0434 protein ETA_21370.